Consider the following 366-residue polypeptide: Mitochondrial carrier protein MTM1 (366 aa).

Solcar repeat units lie at residues 14-149 (ERML…IRDV), 156-250 (YPTL…CKER), and 266-359 (VHFI…SKKV). Transmembrane regions (helical) follow at residues 17–36 (LSAGAGSVLTSLILTPMDVV), 126–146 (SLTLLMAIPANMVYFSGYEYI), 162–182 (LFCGAIARVFAATSIAPLELV), 229–249 (TLWRDVPFSAIYWSSYELCKE), 268–286 (FINSFASGCISGMIAAICT), and 331–352 (LYTGLAARVIKIRPSCAIMISS).

It belongs to the mitochondrial carrier (TC 2.A.29) family.

It localises to the mitochondrion inner membrane. Its function is as follows. Involved in the mitochondrial activation of SOD2 by specifically facilitating insertion of the essential manganese cofactor. Has the ability to activate iron regulon in an iron-dependent manner. Responds to calorie restriction (CR) strength. The protein is Mitochondrial carrier protein MTM1 (MTM1) of Saccharomyces cerevisiae (strain ATCC 204508 / S288c) (Baker's yeast).